We begin with the raw amino-acid sequence, 230 residues long: Ribosomal RNA small subunit methyltransferase Nep1 (230 aa).

S-adenosyl-L-methionine contacts are provided by residues G184, G189, and 205 to 210; that span reads IYNKPL.

Belongs to the class IV-like SAM-binding methyltransferase superfamily. RNA methyltransferase NEP1 family. In terms of assembly, homodimer.

It catalyses the reaction a pseudouridine in rRNA + S-adenosyl-L-methionine = an N(1)-methylpseudouridine in rRNA + S-adenosyl-L-homocysteine + H(+). In terms of biological role, methyltransferase involved in ribosomal biogenesis. Specifically catalyzes the N1-methylation of the pseudouridine corresponding to position 914 in M.jannaschii 16S rRNA. This Staphylothermus marinus (strain ATCC 43588 / DSM 3639 / JCM 9404 / F1) protein is Ribosomal RNA small subunit methyltransferase Nep1.